A 53-amino-acid polypeptide reads, in one-letter code: uncharacterized protein (53 aa).

It is found in the mitochondrion matrix. Its subcellular location is the kinetoplast. This is an uncharacterized protein from Trypanosoma brucei brucei.